The following is a 383-amino-acid chain: Processive diacylglycerol beta-glucosyltransferase (383 aa).

The protein belongs to the glycosyltransferase 28 family. UgtP subfamily.

The protein localises to the cell membrane. The catalysed reaction is a 1,2-diacyl-3-O-(beta-D-glucopyranosyl)-sn-glycerol + UDP-alpha-D-glucose = a 1,2-diacyl-3-O-(beta-D-Glc-(1-&gt;6)-beta-D-Glc)-sn-glycerol + UDP + H(+). The enzyme catalyses a 1,2-diacyl-3-O-(beta-D-Glc-(1-&gt;6)-beta-D-Glc)-sn-glycerol + UDP-alpha-D-glucose = a 1,2-diacyl-3-O-(beta-D-Glc-(1-&gt;6)-beta-D-Glc-(1-&gt;6)-beta-D-Glc)-sn-glycerol + UDP + H(+). It catalyses the reaction a 1,2-diacyl-sn-glycerol + UDP-alpha-D-glucose = a 1,2-diacyl-3-O-(beta-D-glucopyranosyl)-sn-glycerol + UDP + H(+). Its pathway is glycolipid metabolism; diglucosyl-diacylglycerol biosynthesis. Its function is as follows. Processive glucosyltransferase involved in the biosynthesis of both the bilayer- and non-bilayer-forming membrane glucolipids. Is able to successively transfer up to three glucosyl residues to diacylglycerol (DAG), thereby catalyzing the formation of beta-monoglucosyl-DAG (3-O-(beta-D-glucopyranosyl)-1,2-diacyl-sn-glycerol), beta-diglucosyl-DAG (3-O-(beta-D-glucopyranosyl-beta-(1-&gt;6)-D-glucopyranosyl)-1,2-diacyl-sn-glycerol) and beta-triglucosyl-DAG (3-O-(beta-D-glucopyranosyl-beta-(1-&gt;6)-D-glucopyranosyl-beta-(1-&gt;6)-D-glucopyranosyl)-1,2-diacyl-sn-glycerol). Beta-diglucosyl-DAG is the predominant glycolipid found in Bacillales and is also used as a membrane anchor for lipoteichoic acid (LTA). The polypeptide is Processive diacylglycerol beta-glucosyltransferase (Bacillus licheniformis (strain ATCC 14580 / DSM 13 / JCM 2505 / CCUG 7422 / NBRC 12200 / NCIMB 9375 / NCTC 10341 / NRRL NRS-1264 / Gibson 46)).